Consider the following 221-residue polypeptide: Oxaloacetate tautomerase FAHD1, mitochondrial (221 aa).

Residues Met1–Tyr24 constitute a mitochondrion transit peptide. Arg22 contributes to the oxalate binding site. The residue at position 37 (Ser37) is a Phosphoserine. Glu68, Glu70, and Asp99 together coordinate Mg(2+). Lys110 bears the N6-acetyllysine mark. Lys112 is modified (N6-succinyllysine). 2 residues coordinate oxalate: Lys120 and Thr189.

It belongs to the FAH family. Homodimer. Requires Mg(2+) as cofactor. The cofactor is Mn(2+). As to expression, ubiquitous (at protein level).

The protein localises to the mitochondrion. It is found in the cytoplasm. Its subcellular location is the cytosol. The catalysed reaction is oxaloacetate = enol-oxaloacetate. It carries out the reaction oxaloacetate + H(+) = pyruvate + CO2. It catalyses the reaction a 3-acylpyruvate + H2O = a carboxylate + pyruvate + H(+). The enzyme catalyses acetylpyruvate + H2O = acetate + pyruvate + H(+). The catalysed reaction is 3-fumarylpyruvate + H2O = fumarate + pyruvate + H(+). Oxaloacetate decarboxylation is competitively inhibited by oxalate. Functionally, tautomerase that converts enol-oxaloacetate, a strong inhibitor of succinate dehydrogenase, to the physiological keto form of oxaloacetate. It is thereby required to maximize aerobic respiration efficiency by preventing succinate dehydrogenase inhibition. Also acts as a weak oxaloacetate decarboxylase (ODx), catalyzing the decarboxylation of oxaloacetate (OAA) to pyruvate and CO(2), and as such is likely a regulatory enzyme in the TCA cycle. Also displays acylpyruvase activity, being able to hydrolyze acetylpyruvate and fumarylpyruvate in vitro. Exhibits only a weak hydrolase activity on methylacetopyruvate and acetylacetone, and no activity toward acetoacetyl-CoA. The polypeptide is Oxaloacetate tautomerase FAHD1, mitochondrial (Homo sapiens (Human)).